Consider the following 609-residue polypeptide: MNSSYTQRYALPKCIAISDYLFHRLNQLNIHTIFGLSGEFSMPLLDKLYNIPNLRWAGNSNELNAAYAADGYSRLKGLGCLITTFGVGELSAINGVAGSYAEHVGILHIVGMPPTSAQTKQLLLHHTLGNGDFTVFHRIASDVACYTTLIIDSELCADEVDKCIKKAWIEQRPVYMGMPVNQVNLPIESARLNTPLDLQLHKNDPDVEKEVISRILSFIYKSQNPAIIVDACTSRQNLIEETKELCNRLKFPVFVTPMGKGTVNETDPQFGGVFTGSISAPEVREVVDFADFIIVIGCMLSEFSTSTFHFQYKTKNCALLYSTSVKLKNATYPDLSIKLLLQKILANLDESKLSYQPSEQPSMMVPRPYPAGNVLLRQEWVWNEISHWFQPGDIIITETGASAFGVNQTRFPVNTLGISQALWGSVGYTMGACLGAEFAVQEINKDKFPATKHRVILFMGDGAFQLTVQELSTIVKWGLTPYIFVMNNQGYSVDRFLHHRSDASYYDIQPWNYLGLLRVFGCTNYETKKIITVGEFRSMISDPNFATNDKIRMIEIMLPPRDVPQALLDRWVVEKEQSKQVQEENENSSAVNTPTPEFQPLLKKNQVGY.

The tract at residues 578–598 (SKQVQEENENSSAVNTPTPEF) is disordered.

Belongs to the TPP enzyme family. Mg(2+) serves as cofactor. The cofactor is thiamine diphosphate.

The protein resides in the nucleus. The enzyme catalyses 4-methyl-2-oxopentanoate + H(+) = 3-methylbutanal + CO2. It carries out the reaction (S)-3-methyl-2-oxopentanoate + H(+) = 2-methylbutanal + CO2. The protein operates within amino-acid degradation; Ehrlich pathway. In terms of biological role, one of five 2-oxo acid decarboxylases (PDC1, PDC5, PDC6, ARO10, and THI3) involved in amino acid catabolism. The enzyme catalyzes the decarboxylation of amino acids, which, in a first step, have been transaminated to the corresponding 2-oxo acids (alpha-keto-acids). In a third step, the resulting aldehydes are reduced to alcohols, collectively referred to as fusel oils or alcohols. Its preferred substrates are the transaminated amino acids derived from leucine (4-methyl-2-oxopentanoate, also alpha-keto-isocaproate) and isoleucine ((3S)-3-methyl-2-oxopentanoate, also alpha-keto-beta-methylvalerate), whereas transaminated valine, transaminated aromatic amino acids, and pyruvate are no substrates. In analogy to the pyruvate decarboxylases the enzyme may in a side-reaction catalyze condensation (or carboligation) reactions leading to the formation of 2-hydroxy ketone, collectively called acyloins. The enzyme is also positively regulating the thiamine metabolism by a molecular mechanism that may involve thiamine concentration sensing and signal transmission. The sequence is that of Thiamine metabolism regulatory protein THI3 (THI3) from Saccharomyces cerevisiae (strain ATCC 204508 / S288c) (Baker's yeast).